Reading from the N-terminus, the 515-residue chain is Tripartite motif-containing protein 5 (515 aa).

Residue Ala2 is modified to N-acetylalanine. Residues 15–60 (CPICLELLTEPLSLPCGHSFCQACITANHKESMLYKEEERSCPVCR) form an RING-type zinc finger. Ser87 bears the Phosphoserine mark. Residues 92-133 (QKVDHCARHGEKLLLFCQEDSKVICWLCERSQEHRGHHTFLM) form a B box-type zinc finger. Residues Cys97, His100, Cys119, and His125 each contribute to the Zn(2+) site. Residues 137–225 (AQEYHVKLQT…LTKSETEMVQ (89 aa)) adopt a coiled-coil conformation. A required for interaction with GABARAP and for autophagy region spans residues 187 to 200 (FEQLREILDWEESN). Residues 283–515 (LKGMLDMFRE…VPMTLCSPSS (233 aa)) form the B30.2/SPRY domain.

This sequence belongs to the TRIM/RBCC family. In terms of assembly, can form homodimers and homotrimers. In addition to lower-order dimerization, also exhibits a higher-order multimerization and both low- and high-order multimerizations are essential for its restriction activity. Interacts with BTBD1 and BTBD2. Interacts with PSMC4, PSMC5, PSMD7 and HSPA8/HSC70. Interacts (via B30.2/SPRY domain) with HSPA1A/B. Interacts with PSMC2, MAP3K7/TAK1, TAB2 and TAB3. Interacts with SQSTM1. Interacts with TRIM6 and TRIM34. Interacts with ULK1 (phosphorylated form), GABARAP, GABARAPL1, GABARAPL2, MAP1LC3A, MAP1LC3C and BECN1. In terms of processing, degraded in a proteasome-independent fashion in the absence of viral infection but in a proteasome-dependent fashion following exposure to restriction sensitive virus. Autoubiquitinated in a RING finger- and UBE2D2-dependent manner. Monoubiquitinated by TRIM21. Deubiquitinated by Yersinia YopJ. Ubiquitination may not lead to proteasomal degradation.

The protein resides in the cytoplasm. The protein localises to the nucleus. The enzyme catalyses S-ubiquitinyl-[E2 ubiquitin-conjugating enzyme]-L-cysteine + [acceptor protein]-L-lysine = [E2 ubiquitin-conjugating enzyme]-L-cysteine + N(6)-ubiquitinyl-[acceptor protein]-L-lysine.. It participates in protein modification; protein ubiquitination. Functionally, capsid-specific restriction factor that prevents infection from non-host-adapted retroviruses. Blocks viral replication early in the life cycle, after viral entry but before reverse transcription. In addition to acting as a capsid-specific restriction factor, also acts as a pattern recognition receptor that activates innate immune signaling in response to the retroviral capsid lattice. Binding to the viral capsid triggers its E3 ubiquitin ligase activity, and in concert with the heterodimeric ubiquitin conjugating enzyme complex UBE2V1-UBE2N (also known as UBC13-UEV1A complex) generates 'Lys-63'-linked polyubiquitin chains, which in turn are catalysts in the autophosphorylation of the MAP3K7/TAK1 complex (includes TAK1, TAB2, and TAB3). Activation of the MAP3K7/TAK1 complex by autophosphorylation results in the induction and expression of NF-kappa-B and MAPK-responsive inflammatory genes, thereby leading to an innate immune response in the infected cell. Restricts infection by human immunodeficiency virus type 1 (HIV-1), simian immunodeficiency virus (SIV-mac) and N-tropic murine leukemia viruse (N-MLV). Plays a role in regulating autophagy through activation of autophagy regulator BECN1 by causing its dissociation from its inhibitors BCL2 and TAB2. This chain is Tripartite motif-containing protein 5 (TRIM5), found in Chlorocebus tantalus (Tantalus monkey).